A 122-amino-acid chain; its full sequence is MIQMQTQLEVADNTGARRVMCIKVLGGSKRRYATVGDIIKVSIKDAAPRGRVKKGDVYNAVVVRTAKGVRRPDGSLIKFDGNAAVLLNNKLEPIGTRIFGPVTRELRTERFMKIVSLAPEVL.

Belongs to the universal ribosomal protein uL14 family. As to quaternary structure, part of the 50S ribosomal subunit. Forms a cluster with proteins L3 and L19. In the 70S ribosome, L14 and L19 interact and together make contacts with the 16S rRNA in bridges B5 and B8.

In terms of biological role, binds to 23S rRNA. Forms part of two intersubunit bridges in the 70S ribosome. In Laribacter hongkongensis (strain HLHK9), this protein is Large ribosomal subunit protein uL14.